The primary structure comprises 322 residues: MHTSIVTLNLDAYQNFLANAIFCNLLLTMCLYWFSLIIVNNNLICNLAKFSAVNSNVILFFYLSWRWYNYNFFPLSNLYESLMFLSCLLLFIYQFIEFKTRSRVIGALVLPLIVLVQGFASLSLPTAMQKSSPLVPALQSNWLMLHVSMMMLSYATLLLGSLFSILYLVLYKDKKILTKKSIKEQFVEENFVFQLTTSAFSLNQTSNIITEAKTDRQRLILSLDNWSYRTIGIGFPFLTMGIISGAVWANEAWGSYWSWDPKETWALITWLIFASYLHARLTKGWRGKRAAFLGSFGFFIVWVCYLGVNFLGKGLHSYGFLN.

The next 8 membrane-spanning stretches (helical) occupy residues 19–39 (NAIF…LIIV), 43–63 (LICN…FFYL), 72–92 (FFPL…LLFI), 104–124 (VIGA…SLSL), 150–170 (MMLS…YLVL), 230–250 (TIGI…VWAN), 264–281 (TWAL…HARL), and 291–311 (AFLG…VNFL).

This sequence belongs to the CcmF/CycK/Ccl1/NrfE/CcsA family. May interact with Ccs1.

It localises to the plastid. The protein localises to the chloroplast thylakoid membrane. Functionally, required during biogenesis of c-type cytochromes (cytochrome c6 and cytochrome f) at the step of heme attachment. The protein is Cytochrome c biogenesis protein CcsA of Heterosigma akashiwo (strain NIES-293 / 8280G21-1).